We begin with the raw amino-acid sequence, 255 residues long: Triosephosphate isomerase (255 aa).

10–12 lines the substrate pocket; that stretch reads NWK. Residue H96 is the Electrophile of the active site. Catalysis depends on E168, which acts as the Proton acceptor. Substrate is bound by residues G174, S213, and 234-235; that span reads GG.

Belongs to the triosephosphate isomerase family. As to quaternary structure, homodimer.

It is found in the cytoplasm. It catalyses the reaction D-glyceraldehyde 3-phosphate = dihydroxyacetone phosphate. Its pathway is carbohydrate biosynthesis; gluconeogenesis. The protein operates within carbohydrate degradation; glycolysis; D-glyceraldehyde 3-phosphate from glycerone phosphate: step 1/1. Functionally, involved in the gluconeogenesis. Catalyzes stereospecifically the conversion of dihydroxyacetone phosphate (DHAP) to D-glyceraldehyde-3-phosphate (G3P). This is Triosephosphate isomerase from Histophilus somni (strain 2336) (Haemophilus somnus).